Here is a 220-residue protein sequence, read N- to C-terminus: N-(5'-phosphoribosyl)anthranilate isomerase (220 aa).

This sequence belongs to the TrpF family.

The enzyme catalyses N-(5-phospho-beta-D-ribosyl)anthranilate = 1-(2-carboxyphenylamino)-1-deoxy-D-ribulose 5-phosphate. Its pathway is amino-acid biosynthesis; L-tryptophan biosynthesis; L-tryptophan from chorismate: step 3/5. This chain is N-(5'-phosphoribosyl)anthranilate isomerase, found in Agrobacterium fabrum (strain C58 / ATCC 33970) (Agrobacterium tumefaciens (strain C58)).